A 218-amino-acid chain; its full sequence is Small ribosomal subunit protein uS3c (218 aa).

The 72-residue stretch at 47–118 (VQKNIRISSG…KLNIAITRIS (72 aa)) folds into the KH type-2 domain.

Belongs to the universal ribosomal protein uS3 family. Part of the 30S ribosomal subunit.

It is found in the plastid. Its subcellular location is the chloroplast. The protein is Small ribosomal subunit protein uS3c (rps3) of Barbarea verna (Land cress).